A 699-amino-acid polypeptide reads, in one-letter code: Elongation factor G 1 (699 aa).

In terms of domain architecture, tr-type G spans 8 to 290; that stretch reads ERYRNIGICA…AVIEYLPSPT (283 aa). GTP is bound by residues 17 to 24, 88 to 92, and 142 to 145; these read AHVDAGKT, DTPGH, and NKMD.

It belongs to the TRAFAC class translation factor GTPase superfamily. Classic translation factor GTPase family. EF-G/EF-2 subfamily.

The protein localises to the cytoplasm. In terms of biological role, catalyzes the GTP-dependent ribosomal translocation step during translation elongation. During this step, the ribosome changes from the pre-translocational (PRE) to the post-translocational (POST) state as the newly formed A-site-bound peptidyl-tRNA and P-site-bound deacylated tRNA move to the P and E sites, respectively. Catalyzes the coordinated movement of the two tRNA molecules, the mRNA and conformational changes in the ribosome. In Hahella chejuensis (strain KCTC 2396), this protein is Elongation factor G 1.